Consider the following 385-residue polypeptide: ATP synthase subunit a-1 (385 aa).

Residues 1–133 (MRRIFLFDEN…ALNIVGQAAA (133 aa)) constitute a propeptide that is removed on maturation. A run of 7 helical transmembrane segments spans residues 154 to 174 (FSFT…LLLI), 220 to 240 (FFPC…QGMI), 249 to 269 (HFLI…IVGF), 276 to 296 (FFSF…LVLL), 316 to 336 (MMAG…MLCM), 339 to 359 (IFYF…TGLE), and 362 to 382 (VAIL…NDAI).

This sequence belongs to the ATPase A chain family. F-type ATPases have 2 components, CF(1) - the catalytic core - and CF(0) - the membrane proton channel. CF(1) has five subunits: alpha(3), beta(3), gamma(1), delta(1), epsilon(1). CF(0) has three main subunits: a, b and c.

It is found in the mitochondrion inner membrane. Mitochondrial membrane ATP synthase (F(1)F(0) ATP synthase or Complex V) produces ATP from ADP in the presence of a proton gradient across the membrane which is generated by electron transport complexes of the respiratory chain. F-type ATPases consist of two structural domains, F(1) - containing the extramembraneous catalytic core and F(0) - containing the membrane proton channel, linked together by a central stalk and a peripheral stalk. During catalysis, ATP synthesis in the catalytic domain of F(1) is coupled via a rotary mechanism of the central stalk subunits to proton translocation. Key component of the proton channel; it may play a direct role in the translocation of protons across the membrane. This chain is ATP synthase subunit a-1 (ATP6-1), found in Arabidopsis thaliana (Mouse-ear cress).